Reading from the N-terminus, the 263-residue chain is MAPK-interacting and spindle-stabilizing protein (263 aa).

Positions 13-238 (GSPAPFLPSG…LGKQQGHNTT (226 aa)) are disordered. Composition is skewed to pro residues over residues 14–34 (SPAP…PYPG) and 140–155 (GLQP…PPGP). Low complexity predominate over residues 156 to 165 (SAASPGPGSL). Residues 176 to 189 (PSDSSNPESTLEST) are compositionally biased toward polar residues. A compositionally biased stretch (basic residues) spans 202–213 (IKRRRSKKKSKR).

This sequence belongs to the MISS family. Interacts with MAPK1. Post-translationally, phosphorylated in vitro by MAPK1.

Its subcellular location is the cytoplasm. The protein localises to the cytoskeleton. It localises to the spindle. Functionally, involved in the maintenance of the spindle integrity during the cytostatic factor (CSF) arrest of oocytes. This Mus musculus (Mouse) protein is MAPK-interacting and spindle-stabilizing protein (Mapk1ip1).